Here is a 158-residue protein sequence, read N- to C-terminus: Small ribosomal subunit protein uS9 (158 aa).

This sequence belongs to the universal ribosomal protein uS9 family.

This chain is Small ribosomal subunit protein uS9, found in Brucella melitensis biotype 1 (strain ATCC 23456 / CCUG 17765 / NCTC 10094 / 16M).